Here is a 665-residue protein sequence, read N- to C-terminus: Soluble lamin-associated protein of 75 kDa (665 aa).

The tract at residues 309–665 is disordered; that stretch reads AFASTSEGPE…GPGKKKAKLT (357 aa). Residues 311 to 326 show a composition bias toward polar residues; sequence ASTSEGPEKTPVSTRT. The segment covering 327 to 338 has biased composition (basic residues); it reads RSSHLKRPKIGK. Phosphoserine occurs at positions 348 and 377. Residues 376 to 397 are compositionally biased toward acidic residues; that stretch reads SSEEFLEEEPEQGVIDFEDESG. Basic and acidic residues predominate over residues 412–421; the sequence is QKQDGDKDSA. Over residues 440-451 the composition is skewed to acidic residues; that stretch reads TEDEDSTSEGLE. Phosphoserine is present on residues serine 447 and serine 512. Polar residues-rich tracts occupy residues 521–533 and 553–566; these read LGSS…VSNI and VSQN…SSVE. A phosphoserine mark is found at serine 610, serine 613, and serine 630. Residues 646-665 are compositionally biased toward basic residues; the sequence is NLRRKAKGHKGPGKKKAKLT.

It belongs to the FAM169 family.

Its subcellular location is the nucleus envelope. The protein localises to the nucleus inner membrane. This is Soluble lamin-associated protein of 75 kDa (Fam169a) from Mus musculus (Mouse).